Reading from the N-terminus, the 65-residue chain is Large ribosomal subunit protein bL35 (65 aa).

It belongs to the bacterial ribosomal protein bL35 family.

This chain is Large ribosomal subunit protein bL35, found in Baumannia cicadellinicola subsp. Homalodisca coagulata.